Here is a 539-residue protein sequence, read N- to C-terminus: Phosphoenolpyruvate carboxykinase (ATP) (539 aa).

Substrate-binding residues include arginine 64, tyrosine 206, and lysine 212. ATP is bound by residues lysine 212, histidine 231, and glycine 247 to threonine 255. 2 residues coordinate Mn(2+): lysine 212 and histidine 231. Residue aspartate 268 coordinates Mn(2+). ATP contacts are provided by residues glutamate 296, arginine 332, arginine 448–isoleucine 449, and threonine 454. Arginine 332 lines the substrate pocket.

This sequence belongs to the phosphoenolpyruvate carboxykinase (ATP) family. Monomer. Mn(2+) is required as a cofactor.

The protein resides in the cytoplasm. It carries out the reaction oxaloacetate + ATP = phosphoenolpyruvate + ADP + CO2. It participates in carbohydrate biosynthesis; gluconeogenesis. Functionally, involved in the gluconeogenesis. Catalyzes the conversion of oxaloacetate (OAA) to phosphoenolpyruvate (PEP) through direct phosphoryl transfer between the nucleoside triphosphate and OAA. In Salmonella arizonae (strain ATCC BAA-731 / CDC346-86 / RSK2980), this protein is Phosphoenolpyruvate carboxykinase (ATP).